Reading from the N-terminus, the 586-residue chain is Capsid scaffolding protein (586 aa).

Active-site charge relay system residues include His-53, Ser-123, and His-142. A compositionally biased stretch (basic and acidic residues) spans 251-263 (SEETPENAIKDRS). 4 disordered regions span residues 251 to 288 (SEET…HVPA), 330 to 364 (ARRD…DIWP), 458 to 486 (NKRD…YFPG), and 530 to 586 (SASN…MMAD). The segment covering 264–284 (VSTQTAPSFDISESQQPSGQT) has biased composition (polar residues). Residues 312 to 331 (EDMVYVPFEKYASLLAASAR) are interaction with pAP. Interaction with major capsid protein stretches follow at residues 566 to 586 (DAQT…MMAD) and 567 to 586 (AQTK…MMAD).

This sequence belongs to the herpesviridae capsid scaffolding protein family. Homomultimer. Interacts with major capsid protein. In terms of assembly, exists in a monomer-dimer equilibrium with the dimer being the active species. Post-translationally, capsid scaffolding protein is cleaved by assemblin after formation of the spherical procapsid. As a result, the capsid obtains its mature, icosahedral shape. Cleavages occur at two or more sites: release (R-site) and maturation (M-site).

It is found in the host cytoplasm. The protein resides in the host nucleus. The catalysed reaction is Cleaves -Ala-|-Ser- and -Ala-|-Ala- bonds in the scaffold protein.. Functionally, acts as a scaffold protein by binding major capsid protein in the cytoplasm, inducing the nuclear localization of both proteins. Multimerizes in the nucleus such as major capsid protein forms the icosahedral T=16 capsid. Autocatalytic cleavage releases the assembly protein, and subsequently abolishes interaction with major capsid protein. Cleavages products are evicted from the capsid before or during DNA packaging. Its function is as follows. Protease that plays an essential role in virion assembly within the nucleus. Catalyzes the cleavage of the assembly protein after formation of the spherical procapsid. By that cleavage, the capsid matures and gains its icosahedral shape. The cleavage sites seem to include -Ala-Ser-, -Ala-Ala-, as well as Ala-Thr bonds. Assemblin and cleavages products are evicted from the capsid before or during DNA packaging. Plays a major role in capsid assembly. Acts as a scaffold protein by binding major capsid protein. Multimerizes in the nucleus such as major capsid protein forms the icosahedral T=16 capsid. Cleaved by assemblin after capsid completion. The cleavages products are evicted from the capsid before or during DNA packaging. The polypeptide is Capsid scaffolding protein (Gallus gallus (Chicken)).